The primary structure comprises 62 residues: MEKSSQIHGSKPGDDNADEPENAAGQSQIRKQGADDLLDEIDGLLESNAEEFVRSYVQKGGQ.

A disordered region spans residues 1–36 (MEKSSQIHGSKPGDDNADEPENAAGQSQIRKQGADD). The segment at 18–56 (DEPENAAGQSQIRKQGADDLLDEIDGLLESNAEEFVRSY) is ARC ATPase binding. Gln62 carries the deamidated glutamine modification. Gln62 is covalently cross-linked (Isoglutamyl lysine isopeptide (Gln-Lys) (interchain with K-? in acceptor proteins)).

The protein belongs to the prokaryotic ubiquitin-like protein family. As to quaternary structure, strongly interacts with the proteasome-associated ATPase ARC through a hydrophobic interface; the interacting region of Pup lies in its C-terminal half. There is one Pup binding site per ARC hexamer ring. Is modified by deamidation of its C-terminal glutamine to glutamate by the deamidase Dop, a prerequisite to the subsequent pupylation process.

The protein operates within protein degradation; proteasomal Pup-dependent pathway. Protein modifier that is covalently attached to lysine residues of substrate proteins, thereby targeting them for proteasomal degradation. The tagging system is termed pupylation. The protein is Prokaryotic ubiquitin-like protein Pup of Corynebacterium kroppenstedtii (strain DSM 44385 / JCM 11950 / CIP 105744 / CCUG 35717).